The following is a 251-amino-acid chain: HTH-type transcriptional regulator IolR (251 aa).

The HTH deoR-type domain occupies 1 to 57 (MKLMRIQEMEEYILSHGTVSLDELCQVFNVSKNTVRRDINKLTEKGAIEKVYGGVTS). The segment at residues 19–38 (VSLDELCQVFNVSKNTVRRD) is a DNA-binding region (H-T-H motif).

Iol operon repressor. This Bacillus subtilis (strain 168) protein is HTH-type transcriptional regulator IolR (iolR).